Reading from the N-terminus, the 431-residue chain is MDSIQIVGGKKLKGTIPISGAKNAALPLMIAALLTEETVTLDNIPHLADVELLIRILNNHGVGYAVDGQKSHHDCIDSRTIHFTAQKITTTYAPYELVRKMRASFWVIGPLLARCHEAYVSLPGGCAIGTRPVNFILEGLKTLGARIAIENGYVHAKAPKGLKGAHYHFPKVTVGGTHVMLMAAATANGTTLLENAACEPEVTNLIQALNAMGAKITGEGTSTLTIEGVKKLHGARISVIADRIEAGTYAMVVAMTGGNVLLKNANPHHLTQVLEVLQKTGLDIEIKPQGLHLKRNPRQTKIMPVNIKTGPYPAFPTDLQAQFMALMTRAQGTACITETIFENRFMHVQELTRLGAQIKLDGQTATVYGREHLQGAPVMATDLRASVSLVIAALAAKGESVINRVYHLDRGFERLEEKLARCGAIIQRITV.

A phosphoenolpyruvate-binding site is contributed by 22 to 23; sequence KN. Arg102 contacts UDP-N-acetyl-alpha-D-glucosamine. The Proton donor role is filled by Cys126. Cys126 is subject to 2-(S-cysteinyl)pyruvic acid O-phosphothioketal. UDP-N-acetyl-alpha-D-glucosamine contacts are provided by Asp318 and Ile340.

The protein belongs to the EPSP synthase family. MurA subfamily.

It localises to the cytoplasm. It catalyses the reaction phosphoenolpyruvate + UDP-N-acetyl-alpha-D-glucosamine = UDP-N-acetyl-3-O-(1-carboxyvinyl)-alpha-D-glucosamine + phosphate. It participates in cell wall biogenesis; peptidoglycan biosynthesis. Its function is as follows. Cell wall formation. Adds enolpyruvyl to UDP-N-acetylglucosamine. The sequence is that of UDP-N-acetylglucosamine 1-carboxyvinyltransferase from Bartonella quintana (strain Toulouse) (Rochalimaea quintana).